The sequence spans 183 residues: tRNA-splicing endonuclease (183 aa).

Residues Tyr120, His128, and Lys159 contribute to the active site.

This sequence belongs to the tRNA-intron endonuclease family. Archaeal short subfamily. As to quaternary structure, homotetramer; although the tetramer contains four active sites, only two participate in the cleavage. Therefore, it should be considered as a dimer of dimers.

The catalysed reaction is pretRNA = a 3'-half-tRNA molecule with a 5'-OH end + a 5'-half-tRNA molecule with a 2',3'-cyclic phosphate end + an intron with a 2',3'-cyclic phosphate and a 5'-hydroxyl terminus.. Endonuclease that removes tRNA introns. Cleaves pre-tRNA at the 5'- and 3'-splice sites to release the intron. The products are an intron and two tRNA half-molecules bearing 2',3' cyclic phosphate and 5'-OH termini. Recognizes a pseudosymmetric substrate in which 2 bulged loops of 3 bases are separated by a stem of 4 bp. The protein is tRNA-splicing endonuclease of Pyrobaculum islandicum (strain DSM 4184 / JCM 9189 / GEO3).